Consider the following 266-residue polypeptide: Protein YABBY 5 (266 aa).

A disordered region spans residues 1-22 (MMSSAPETFSLDHLSQHQQQQP). The segment at 36–63 (CNFCDTILAVGVPCSSLFKTVTVRCGHC) adopts a C4-type zinc-finger fold. Low complexity predominate over residues 119–141 (ASPNVSSITSSNSSCANNAPATS). The interval 119 to 174 (ASPNVSSITSSNSSCANNAPATSMASAANKATQREPQQPKNAPSANRTSEKRQRVP) is disordered. Residues 142–165 (MASAANKATQREPQQPKNAPSANR) are compositionally biased toward polar residues.

Belongs to the YABBY family.

It is found in the nucleus. In terms of biological role, may be involved in leaf cell growth and differentiation, rather than abaxial cell fate determination. The chain is Protein YABBY 5 (YAB5) from Oryza sativa subsp. indica (Rice).